The sequence spans 440 residues: Tumor necrosis factor receptor superfamily member 10B (440 aa).

2 disordered regions span residues 1 to 32 (MEQRGQNAPAASGARKRHGPGPREARGARPGP) and 60 to 84 (DLAPQQRAAPQQKRSSPSEGLCPPG). An N-terminal signal peptide occupies residues 1–55 (MEQRGQNAPAASGARKRHGPGPREARGARPGPRVPKTLVLVVAAVLLLVSAESAL). Topologically, residues 56 to 210 (ITQQDLAPQQ…SPGTPASPCS (155 aa)) are extracellular. 3 TNFR-Cys repeats span residues 57–94 (TQQDLAPQQRAAPQQKRSSPSEGLCPPGHHISEDGRDC), 97–137 (CKYG…NTVC), and 138–178 (QCEE…DIEC). The span at 60-71 (DLAPQQRAAPQQ) shows a compositional bias: low complexity. 7 disulfide bridges follow: cysteine 81-cysteine 94, cysteine 97-cysteine 113, cysteine 116-cysteine 129, cysteine 119-cysteine 137, cysteine 139-cysteine 153, cysteine 156-cysteine 170, and cysteine 160-cysteine 178. The TAPE repeat unit spans residues 192 to 206 (PAVEETVTSSPGTPA). A helical transmembrane segment spans residues 211–231 (LSGIIIGVTVAAVVLIVAVFV). At 232-440 (CKSLLWKKVL…LEGNADSAMS (209 aa)) the chain is on the cytoplasmic side. A Death domain is found at 339 to 422 (RQCFDDFADL…LAKQKIEDHL (84 aa)).

In terms of assembly, monomer. Can interact with TRADD and RIPK1. Interacts with HCMV protein UL141; this interaction prevents TNFRSF10B cell surface expression. Two TNFRSF10B monomers interact with a UL141 homodimer. Three TNFRSF10B molecules interact with TNFSF10 homotrimer. In the absence of stimulation, interacts with BIRC2, DDX3X and GSK3B. The interaction with BIRC2 and DDX3X is further enhanced upon receptor stimulation and accompanied by DDX3X and BIRC2 cleavage. In terms of processing, (Microbial infection) Glycosylated on Arg residue by S.typhimurium protein Ssek3. Widely expressed in adult and fetal tissues; very highly expressed in tumor cell lines such as HeLaS3, K-562, HL-60, SW480, A-549 and G-361; highly expressed in heart, peripheral blood lymphocytes, liver, pancreas, spleen, thymus, prostate, ovary, uterus, placenta, testis, esophagus, stomach and throughout the intestinal tract; not detectable in brain.

It is found in the membrane. Its function is as follows. Receptor for the cytotoxic ligand TNFSF10/TRAIL. The adapter molecule FADD recruits caspase-8 to the activated receptor. The resulting death-inducing signaling complex (DISC) performs caspase-8 proteolytic activation which initiates the subsequent cascade of caspases (aspartate-specific cysteine proteases) mediating apoptosis. Promotes the activation of NF-kappa-B. Essential for ER stress-induced apoptosis. This is Tumor necrosis factor receptor superfamily member 10B (TNFRSF10B) from Homo sapiens (Human).